The following is a 110-amino-acid chain: Cytochrome c (110 aa).

Heme c contacts are provided by cysteine 21, cysteine 24, histidine 25, and methionine 87.

It belongs to the cytochrome c family. Post-translationally, binds 1 heme c group covalently per subunit.

It is found in the mitochondrion intermembrane space. In terms of biological role, electron carrier protein. The oxidized form of the cytochrome c heme group can accept an electron from the heme group of the cytochrome c1 subunit of cytochrome reductase. Cytochrome c then transfers this electron to the cytochrome oxidase complex, the final protein carrier in the mitochondrial electron-transport chain. This is Cytochrome c (CYCK) from Kluyveromyces lactis (strain ATCC 8585 / CBS 2359 / DSM 70799 / NBRC 1267 / NRRL Y-1140 / WM37) (Yeast).